The following is a 537-amino-acid chain: Frizzled-4 (537 aa).

Residues Met1 to Gly36 form the signal peptide. Residues Phe37–Ser212 lie on the Extracellular side of the membrane. The region spanning Glu40–Gly161 is the FZ domain. 8 cysteine pairs are disulfide-bonded: Cys45–Cys106, Cys53–Cys99, Cys90–Cys128, Cys117–Cys158, Cys121–Cys145, Cys181–Cys200, Cys204–Cys282, and Cys302–Cys377. Asn59 carries N-linked (GlcNAc...) asparagine glycosylation. Asn144 carries N-linked (GlcNAc...) asparagine glycosylation. The helical transmembrane segment at Arg213 to Ile243 threads the bilayer. Residues Asp244–Ser249 are Cytoplasmic-facing. A helical membrane pass occupies residues Tyr250–Val275. Residues Gly276–Asn299 lie on the Extracellular side of the membrane. A helical transmembrane segment spans residues Thr300 to Leu333. Topologically, residues Lys334–Gly336 are cytoplasmic. A helical transmembrane segment spans residues His337–Met365. Topologically, residues Arg366–Asn383 are extracellular. The helical transmembrane segment at Leu384–Ser418 threads the bilayer. The Cytoplasmic portion of the chain corresponds to Asn419–Glu431. Residues Arg432–Ser460 form a helical membrane-spanning segment. Residues Asn461–Asn473 lie on the Extracellular side of the membrane. Residues Met474–Ile495 form a helical membrane-spanning segment. The Cytoplasmic segment spans residues Trp496–Val537. The short motif at Lys499–Trp504 is the Lys-Thr-X-X-X-Trp motif, mediates interaction with the PDZ domain of Dvl family members element. Positions Thr535–Val537 match the PDZ-binding motif.

Belongs to the G-protein coupled receptor Fz/Smo family. In terms of assembly, interacts with MAGI3 and NDP. Component of a complex, at least composed of TSPAN12, FZD4 and norrin (NDP). Interacts (via FZ domain) with TSKU; TSKU competes with WNT2B for binding to FZD4, inhibiting Wnt signaling and repressing peripheral eye development. Interacts with glypican GPC3. In terms of processing, ubiquitinated by ZNRF3, leading to its degradation by the proteasome. In terms of tissue distribution, almost ubiquitous. Largely expressed in adult heart, skeletal muscle, ovary, and fetal kidney. Moderate amounts in adult liver, kidney, pancreas, spleen, and fetal lung, and small amounts in placenta, adult lung, prostate, testis, colon, fetal brain and liver.

The protein resides in the cell membrane. Receptor for Wnt proteins. Most frizzled receptors are coupled to the beta-catenin (CTNNB1) canonical signaling pathway, which leads to the activation of disheveled proteins, inhibition of GSK-3 kinase, nuclear accumulation of beta-catenin (CTNNB1) and activation of Wnt target genes. Plays a critical role in retinal vascularization by acting as a receptor for Wnt proteins and norrin (NDP). In retina, it can be activated by Wnt protein-binding and also by Wnt-independent signaling via binding of norrin (NDP), promoting in both cases beta-catenin (CTNNB1) accumulation and stimulation of LEF/TCF-mediated transcriptional programs. A second signaling pathway involving PKC and calcium fluxes has been seen for some family members, but it is not yet clear if it represents a distinct pathway or if it can be integrated in the canonical pathway, as PKC seems to be required for Wnt-mediated inactivation of GSK-3 kinase. Both pathways seem to involve interactions with G-proteins. May be involved in transduction and intercellular transmission of polarity information during tissue morphogenesis and/or in differentiated tissues. The chain is Frizzled-4 (FZD4) from Homo sapiens (Human).